The sequence spans 476 residues: RNA-binding protein 45 (476 aa).

Residues 1 to 20 (MDEAGSSASGGGFRPGVDSL) form a disordered region. RRM domains are found at residues 26 to 106 (SRIF…IAQS) and 121 to 195 (TRIF…PKNK). A Glycyl lysine isopeptide (Lys-Gly) (interchain with G-Cter in SUMO2) cross-link involves residue Lys-34. Ser-199 and Ser-464 each carry phosphoserine. The 73-residue stretch at 392 to 464 (ERLFIVFNPH…VRLKVMLADS (73 aa)) folds into the RRM 3 domain.

The protein localises to the cytoplasm. The protein resides in the nucleus. In terms of biological role, RNA-binding protein with binding specificity for poly(C). May play an important role in neural development. The protein is RNA-binding protein 45 (RBM45) of Homo sapiens (Human).